Consider the following 181-residue polypeptide: ABC transporter E family member 3 (181 aa).

Positions 20–176 constitute an ABC transporter domain; it reads SQIIVMLGEN…KAAFARFHNG (157 aa). ATP is bound at residue 27 to 34; sequence GENGTGKT.

It belongs to the ABC transporter superfamily. ABCE family. Mostly expressed in roots and leaves, and, to a lower extent, in stems, flowers and siliques.

The polypeptide is ABC transporter E family member 3 (ABCE3) (Arabidopsis thaliana (Mouse-ear cress)).